The following is a 1008-amino-acid chain: Probable pre-mRNA-splicing factor ATP-dependent RNA helicase mog-4 (1008 aa).

Disordered stretches follow at residues 104-146 and 169-202; these read SSTK…SESD and NKKE…REES. A compositionally biased stretch (low complexity) spans 127–137; that stretch reads KASKPGKSVKP. The Helicase ATP-binding domain maps to 374–538; that stretch reads IEAVKEHQVL…FDDAPIFRIP (165 aa). 387-394 lines the ATP pocket; it reads GETGSGKT. Residues 485–488 carry the DEAH box motif; it reads DEAH. One can recognise a Helicase C-terminal domain in the interval 563–737; that stretch reads TIMQIHLTQP…NVVLMLKSLG (175 aa). A disordered region spans residues 988–1008; sequence EDATNKKMPKNKGKSGKDLER.

It belongs to the DEAD box helicase family. DEAH subfamily. DDX16/PRP8 sub-subfamily. As to quaternary structure, interacts with mep-1 and smn-1.

The protein localises to the nucleus. The enzyme catalyses ATP + H2O = ADP + phosphate + H(+). In terms of biological role, ATP-binding RNA helicase involved in pre-mRNA splicing. Operates during embryogenesis. The protein is Probable pre-mRNA-splicing factor ATP-dependent RNA helicase mog-4 (mog-4) of Caenorhabditis elegans.